Reading from the N-terminus, the 334-residue chain is Ribosomal RNA small subunit methyltransferase H (334 aa).

Residues 54–56, Asp74, Phe100, Asp121, and Gln128 contribute to the S-adenosyl-L-methionine site; that span reads GGH. The disordered stretch occupies residues 272-318; it reads RHSKGQYPEDENLPMPPKRPRYFSKPKRVGPSKAEISNNPRSRSAWL. A compositionally biased stretch (basic residues) spans 289 to 301; the sequence is KRPRYFSKPKRVG.

Belongs to the methyltransferase superfamily. RsmH family.

The protein localises to the cytoplasm. The catalysed reaction is cytidine(1402) in 16S rRNA + S-adenosyl-L-methionine = N(4)-methylcytidine(1402) in 16S rRNA + S-adenosyl-L-homocysteine + H(+). Specifically methylates the N4 position of cytidine in position 1402 (C1402) of 16S rRNA. This is Ribosomal RNA small subunit methyltransferase H from Psychrobacter arcticus (strain DSM 17307 / VKM B-2377 / 273-4).